The chain runs to 890 residues: Inter-alpha-trypsin inhibitor heavy chain H3 (890 aa).

Positions 1–20 (MAFAWWPCLILALLSSLAAS) are cleaved as a signal peptide. The propeptide occupies 21 to 34 (GFPRSPFRLLGKRS). One can recognise a VIT domain in the interval 29 to 158 (LLGKRSLPEG…KVTFELTYEE (130 aa)). A glycan (N-linked (GlcNAc...) asparagine) is linked at Asn91. A VWFA domain is found at 284 to 467 (NVAFVIDISG…LQLQGFYEEV (184 aa)). The N-linked (GlcNAc...) asparagine glycan is linked to Asn580. Aspartate 1-(chondroitin 4-sulfate)-ester is present on Asp651. Positions 652-890 (PHFIIQIPEK…HTDYIVPNLF (239 aa)) are excised as a propeptide.

The protein belongs to the ITIH family. In terms of assembly, I-alpha-I plasma protease inhibitors are assembled from one or two heavy chains (HC) and one light chain, bikunin. Pre-alpha-inhibitor (P-alpha-I) is composed of ITIH3/HC3 and bikunin. Post-translationally, heavy chains are linked to bikunin via chondroitin 4-sulfate esterified to the alpha-carboxyl of the C-terminal aspartate after propeptide cleavage.

The protein resides in the secreted. In terms of biological role, may act as a carrier of hyaluronan in serum or as a binding protein between hyaluronan and other matrix protein, including those on cell surfaces in tissues to regulate the localization, synthesis and degradation of hyaluronan which are essential to cells undergoing biological processes. The sequence is that of Inter-alpha-trypsin inhibitor heavy chain H3 (ITIH3) from Homo sapiens (Human).